The sequence spans 446 residues: Na(+)-translocating NADH-quinone reductase subunit A (446 aa).

This sequence belongs to the NqrA family. Composed of six subunits; NqrA, NqrB, NqrC, NqrD, NqrE and NqrF.

It catalyses the reaction a ubiquinone + n Na(+)(in) + NADH + H(+) = a ubiquinol + n Na(+)(out) + NAD(+). NQR complex catalyzes the reduction of ubiquinone-1 to ubiquinol by two successive reactions, coupled with the transport of Na(+) ions from the cytoplasm to the periplasm. NqrA to NqrE are probably involved in the second step, the conversion of ubisemiquinone to ubiquinol. The polypeptide is Na(+)-translocating NADH-quinone reductase subunit A (Vibrio atlanticus (strain LGP32) (Vibrio splendidus (strain Mel32))).